Here is a 1058-residue protein sequence, read N- to C-terminus: Protein translocase subunit SECA2, chloroplastic (1058 aa).

Residues 1–58 constitute a chloroplast transit peptide; it reads MGSVSNLVSPNICHPAPPCLTSRSNKFPWTKPISGLLFYRSVTPIKRCHLVRRSCVVS. ATP is bound at residue 167–174; it reads MKTGEGKT.

Belongs to the SecA family. Part of a second Sec protein translocation apparatus. Interacts probably with SCY2.

Its subcellular location is the plastid. It localises to the chloroplast membrane. The enzyme catalyses ATP + H2O + chloroplast-proteinSide 1 = ADP + phosphate + chloroplast-proteinSide 2.. Involved in protein export. Probably interacts with other proteins to allow the postimport or conservative sorting pathway for inner membrane proteins in plastids. May have a central role in coupling the hydrolysis of ATP to the transfer of proteins across the membrane. The protein is Protein translocase subunit SECA2, chloroplastic of Arabidopsis thaliana (Mouse-ear cress).